The primary structure comprises 427 residues: Thymidine phosphorylase (427 aa).

It belongs to the thymidine/pyrimidine-nucleoside phosphorylase family. Homodimer.

It catalyses the reaction thymidine + phosphate = 2-deoxy-alpha-D-ribose 1-phosphate + thymine. Functionally, the enzymes which catalyze the reversible phosphorolysis of pyrimidine nucleosides are involved in the degradation of these compounds and in their utilization as carbon and energy sources, or in the rescue of pyrimidine bases for nucleotide synthesis. The chain is Thymidine phosphorylase (deoA) from Mycobacterium tuberculosis (strain CDC 1551 / Oshkosh).